Consider the following 538-residue polypeptide: RNA-binding protein RO60 (538 aa).

One can recognise a TROVE domain in the interval 16 to 369 (VPNSEGCYVW…SFKLVEPTGK (354 aa)). The interval 120 to 284 (RIPTHLFTFI…DMPLTALLRN (165 aa)) is RNA-binding. The interval 361–538 (FKLVEPTGKR…VIRNFTLDLI (178 aa)) is VWFA-like domain. A divalent metal cation-binding residues include serine 378, serine 380, and threonine 445.

This sequence belongs to the Ro 60 kDa family.

It is found in the cytoplasm. Functionally, RNA-binding protein that binds to misfolded non-coding RNAs, pre-5S rRNA, and several small cytoplasmic RNA molecules known as Y RNAs. May play roles in cilia formation and/or maintenance. The sequence is that of RNA-binding protein RO60 from Xenopus laevis (African clawed frog).